The following is a 435-amino-acid chain: Glutamate-1-semialdehyde 2,1-aminomutase (435 aa).

K266 carries the post-translational modification N6-(pyridoxal phosphate)lysine.

The protein belongs to the class-III pyridoxal-phosphate-dependent aminotransferase family. HemL subfamily. As to quaternary structure, homodimer. It depends on pyridoxal 5'-phosphate as a cofactor.

Its subcellular location is the cytoplasm. It carries out the reaction (S)-4-amino-5-oxopentanoate = 5-aminolevulinate. It participates in porphyrin-containing compound metabolism; protoporphyrin-IX biosynthesis; 5-aminolevulinate from L-glutamyl-tRNA(Glu): step 2/2. The chain is Glutamate-1-semialdehyde 2,1-aminomutase from Helicobacter hepaticus (strain ATCC 51449 / 3B1).